Here is a 416-residue protein sequence, read N- to C-terminus: Casein kinase I isoform epsilon (416 aa).

The Protein kinase domain occupies 9 to 277; that stretch reads YRLGRKIGSG…YLRQLFRNLF (269 aa). Residues 15–23 and K38 contribute to the ATP site; that span reads IGSGSFGDI. Residue D128 is the Proton acceptor of the active site. A compositionally biased stretch (basic and acidic residues) spans 301-318; that stretch reads PEDMDRERREHEREERMG. The interval 301-416 is disordered; the sequence is PEDMDRERRE…TSVPFDHLGK (116 aa). Residues 324–338 show a composition bias toward low complexity; sequence ATRALPPGPPAGATG. Polar residues-rich tracts occupy residues 350–365 and 400–409; these read STPT…TSPR and SRISASQTSV.

This sequence belongs to the protein kinase superfamily. CK1 Ser/Thr protein kinase family. Casein kinase I subfamily. In terms of assembly, monomer. Component of the circadian core oscillator, which includes the CRY proteins, CLOCK, or NPAS2, BMAL1 or BMAL2, CSNK1E, and the PER proteins.

It is found in the cytoplasm. It carries out the reaction L-seryl-[protein] + ATP = O-phospho-L-seryl-[protein] + ADP + H(+). It catalyses the reaction L-threonyl-[protein] + ATP = O-phospho-L-threonyl-[protein] + ADP + H(+). Casein kinases are operationally defined by their preferential utilization of acidic proteins such as caseins as substrates. Can phosphorylate a large number of proteins. Participates in Wnt signaling. Phosphorylates DVL1. Central component of the circadian clock. May act as a negative regulator of circadian rhythmicity by phosphorylating PER1 and PER2. Retains PER1 in the cytoplasm. The sequence is that of Casein kinase I isoform epsilon (CSNK1E) from Gallus gallus (Chicken).